The primary structure comprises 219 residues: Probable nicotinate-nucleotide adenylyltransferase (219 aa).

The protein belongs to the NadD family.

It catalyses the reaction nicotinate beta-D-ribonucleotide + ATP + H(+) = deamido-NAD(+) + diphosphate. Its pathway is cofactor biosynthesis; NAD(+) biosynthesis; deamido-NAD(+) from nicotinate D-ribonucleotide: step 1/1. Catalyzes the reversible adenylation of nicotinate mononucleotide (NaMN) to nicotinic acid adenine dinucleotide (NaAD). The protein is Probable nicotinate-nucleotide adenylyltransferase of Erythrobacter litoralis (strain HTCC2594).